A 308-amino-acid chain; its full sequence is 4-diphosphocytidyl-2-C-methyl-D-erythritol kinase (308 aa).

Residue Lys23 is part of the active site. 108 to 118 is an ATP binding site; the sequence is PVAAGIGGGSA. Residue Asp150 is part of the active site.

It belongs to the GHMP kinase family. IspE subfamily.

It catalyses the reaction 4-CDP-2-C-methyl-D-erythritol + ATP = 4-CDP-2-C-methyl-D-erythritol 2-phosphate + ADP + H(+). Its pathway is isoprenoid biosynthesis; isopentenyl diphosphate biosynthesis via DXP pathway; isopentenyl diphosphate from 1-deoxy-D-xylulose 5-phosphate: step 3/6. In terms of biological role, catalyzes the phosphorylation of the position 2 hydroxy group of 4-diphosphocytidyl-2C-methyl-D-erythritol. The protein is 4-diphosphocytidyl-2-C-methyl-D-erythritol kinase of Nitrobacter winogradskyi (strain ATCC 25391 / DSM 10237 / CIP 104748 / NCIMB 11846 / Nb-255).